We begin with the raw amino-acid sequence, 601 residues long: Glutathione-regulated potassium-efflux system protein KefB (601 aa).

13 consecutive transmembrane segments (helical) span residues 4–24, 29–49, 55–75, 87–107, 111–131, 152–172, 177–197, 207–227, 230–250, 262–282, 284–304, 324–344, and 356–376; these read ADLLTAGVLFLFAAVAAVPLA, IGAVLGYLLAGIAIGPWGLGF, EILHFSELGVVFLMFIIGLEL, IFGVGAAQVLLSAAVLAGLLM, FLWQAAVVGGIGLAMSSTAMA, VLLFQDLAVIPALALVPLLAG, HFDWFKVAMKVLAFAVMLIGG, FIAASGVREVFTAATLLLVLS, LFMDALGLSMALGTFIAGVLL, AIDPFKGLLLGLFFISVGMSL, LGVLYTHLLWVAASVVILVVI, MQFASVLSQGGEFAFVLFSTA, and ALLLVTVTLSMMTTPLLMKGI. Residues 400 to 519 form the RCK N-terminal domain; the sequence is KPQVIVVGFG…AGVTQFSRET (120 aa).

It belongs to the monovalent cation:proton antiporter 2 (CPA2) transporter (TC 2.A.37) family. KefB subfamily. In terms of assembly, interacts with the regulatory subunit KefG.

It localises to the cell inner membrane. Its function is as follows. Pore-forming subunit of a potassium efflux system that confers protection against electrophiles. Catalyzes K(+)/H(+) antiport. The polypeptide is Glutathione-regulated potassium-efflux system protein KefB (Salmonella newport (strain SL254)).